Here is a 106-residue protein sequence, read N- to C-terminus: Large ribosomal subunit protein bL21c (106 aa).

It belongs to the bacterial ribosomal protein bL21 family. In terms of assembly, part of the 50S ribosomal subunit.

It localises to the plastid. The protein resides in the chloroplast. In terms of biological role, this protein binds to 23S rRNA. The chain is Large ribosomal subunit protein bL21c from Gracilaria tenuistipitata var. liui (Red alga).